The primary structure comprises 69 residues: MKEGIHPKYEAVEVKCHCGNVIQTRSTKCADMQVEVCSACHPFYTGKQKLLDTAGRIDRFRKKYAKNNK.

Residues Cys16, Cys18, Cys37, and Cys40 each coordinate Zn(2+).

It belongs to the bacterial ribosomal protein bL31 family. Type A subfamily. As to quaternary structure, part of the 50S ribosomal subunit. Requires Zn(2+) as cofactor.

Binds the 23S rRNA. The chain is Large ribosomal subunit protein bL31 from Syntrophotalea carbinolica (strain DSM 2380 / NBRC 103641 / GraBd1) (Pelobacter carbinolicus).